We begin with the raw amino-acid sequence, 558 residues long: Sinalpyl alcohol oxidase Nec3 (558 aa).

Positions 1-28 (MATMAILQRTFSFILIFSIALHLKSLFA) are cleaved as a signal peptide. An FAD-binding site is contributed by 64–65 (TA). Asn-76 carries an N-linked (GlcNAc...) asparagine glycan. Residues 83–84 (ER), Val-131, Ser-135, and 139–142 (NFGF) contribute to the FAD site. Residue Asn-180 is glycosylated (N-linked (GlcNAc...) asparagine). Residue Val-247 coordinates FAD. Residues Asn-308, Asn-386, and Asn-473 are each glycosylated (N-linked (GlcNAc...) asparagine). Cysteines 433 and 484 form a disulfide. Position 492-493 (492-493 (YH)) interacts with FAD. His-493 (proton donor) is an active-site residue. The active-site Proton acceptor is Asn-531. 532–533 (PQ) contributes to the FAD binding site.

Belongs to the GMC oxidoreductase family. In terms of assembly, monomer. FAD is required as a cofactor. Confined to nectaries.

It carries out the reaction (E)-sinapyl alcohol + O2 = (E)-sinapaldehyde + H2O2. It functions in the pathway alkaloid biosynthesis. Its function is as follows. Involved in the production of blood-red nectar containing the alkaloid nesocodin and that serves as a visual attractant for pollinator visitation, including vertebrates such as Phelsuma geckos. The nectar is initially acidic and pale yellow, but slowly becomes alkaline before turning into red within 24 hours. Together with NEC1 and NEC2, facilitates the condensation of sinapaldehyde ((E)-3,5-dimethoxy-4-hydroxycinnamaldehyde) and proline to form nesocodin, a pigment with a stable imine bond. Catalyzes the conversion of sinapyl alcohol to sinapaldehyde. The protein is Sinalpyl alcohol oxidase Nec3 of Nesocodon mauritianus (Blue Mauritius bellflower).